A 304-amino-acid chain; its full sequence is Ribonuclease BN (304 aa).

Zn(2+) contacts are provided by H63, H65, D67, H68, H140, D211, and H269. D67 acts as the Proton acceptor in catalysis.

This sequence belongs to the RNase Z family. RNase BN subfamily. As to quaternary structure, homodimer. Requires Zn(2+) as cofactor.

In terms of biological role, zinc phosphodiesterase, which has both exoribonuclease and endoribonuclease activities. This Erwinia tasmaniensis (strain DSM 17950 / CFBP 7177 / CIP 109463 / NCPPB 4357 / Et1/99) protein is Ribonuclease BN.